A 122-amino-acid polypeptide reads, in one-letter code: Basic phospholipase A2 homolog (122 aa).

7 disulfides stabilise this stretch: Cys-26/Cys-115, Cys-28/Cys-44, Cys-43/Cys-95, Cys-49/Cys-122, Cys-50/Cys-88, Cys-57/Cys-81, and Cys-75/Cys-86. The important for membrane-damaging activities in eukaryotes and bacteria; heparin-binding stretch occupies residues 105–117 (KRYMTYPNILCSS).

This sequence belongs to the phospholipase A2 family. Group II subfamily. N49 sub-subfamily. In terms of tissue distribution, expressed by the venom gland.

The protein resides in the secreted. The protein is Basic phospholipase A2 homolog of Gloydius halys (Chinese water mocassin).